The primary structure comprises 162 residues: Probable chemoreceptor glutamine deamidase CheD (162 aa).

It belongs to the CheD family.

It catalyses the reaction L-glutaminyl-[protein] + H2O = L-glutamyl-[protein] + NH4(+). Its function is as follows. Probably deamidates glutamine residues to glutamate on methyl-accepting chemotaxis receptors (MCPs), playing an important role in chemotaxis. The polypeptide is Probable chemoreceptor glutamine deamidase CheD (Clostridium novyi (strain NT)).